A 375-amino-acid chain; its full sequence is Succinyl-diaminopimelate desuccinylase (375 aa).

Residue histidine 66 participates in Zn(2+) binding. Aspartate 68 is a catalytic residue. Residue aspartate 99 coordinates Zn(2+). Glutamate 133 (proton acceptor) is an active-site residue. Zn(2+)-binding residues include glutamate 134, glutamate 162, and histidine 348.

The protein belongs to the peptidase M20A family. DapE subfamily. As to quaternary structure, homodimer. The cofactor is Zn(2+). It depends on Co(2+) as a cofactor.

It catalyses the reaction N-succinyl-(2S,6S)-2,6-diaminopimelate + H2O = (2S,6S)-2,6-diaminopimelate + succinate. The protein operates within amino-acid biosynthesis; L-lysine biosynthesis via DAP pathway; LL-2,6-diaminopimelate from (S)-tetrahydrodipicolinate (succinylase route): step 3/3. Catalyzes the hydrolysis of N-succinyl-L,L-diaminopimelic acid (SDAP), forming succinate and LL-2,6-diaminopimelate (DAP), an intermediate involved in the bacterial biosynthesis of lysine and meso-diaminopimelic acid, an essential component of bacterial cell walls. In Klebsiella pneumoniae subsp. pneumoniae (strain ATCC 700721 / MGH 78578), this protein is Succinyl-diaminopimelate desuccinylase.